Consider the following 2103-residue polypeptide: MDRFSFDDSIRFEEDSLCSWSSEPESLCNNWRGWKKPAAGSGAGNGGLSGMGGMAVAGGSGAPPFGGAGASGSCTPGGNGTAMANTSTCGRHYEVSTLAELAARCVASYIPFELVEHVYPPVPEQLQLRIAFWSFPDNEEDIRLYSCLANSSADEFNRGDSLFRLRAVKDPLQIGFHLSASVVNQTPRAYFNVAVTFDRRRISSCNCTCTSSAYWCSHVVAVCLHRIHCPQEVCLRAPVSESLTRLQRDQLQKFAQYLISELPQQILPTAQRLLDELLSAQPTAINTVCGAPDPTAGASINDQTSWYLDEKTLHNNIKRILIKFCLPAPIVFSDVNYLTNSAPPAAAEWSSLLRPLRGREPEGMWNLLSIVREMYRRCDRNAVRLLEIITEECLYCDQILIWWFQTKLALMMGSHGHSGGKHSNTHSNSTALQHACSSLCDEIVALWRLAALNPGLAPDERDMLHAQFTAWHLKILDRVVKSRMMPSYTNKHQQNSRSETELFIGFKPAIEACYLDWEGYPIPGVTHTHDTNPIYYSPFTCFKHTDLKGESNNPGQLNATQALMSNNKHYNYFSSSSDHGMHAGAFKQRLDRPFRESRFYTNPADLDGGAALAGGGSGRFSTGLGSVAVGGAGAGGLGQMSGGVNNSVGGSAAAEVNPVQQQLPSGSAGVGASVTNAKVVVATDGNRSSASSEGFCENDDFGGDTSSSHNYCPPGQAVVPGQKSALTESDSQSSFDAVSHQSKDEPPVGGVGVAVGVEQALSTSDTSSASSSSSSASTASGSSNSSTSSMLMAGQEATVGVGGAVQQTTRRLSKDESFSSSSDEFNQGGVGGSAGRVAMASSGSGSGAGDTVAVGSGSTAGGDLTPVPSTSAAARAALAASSTGPVISASPHLAASAAGGLGVLGVGADQPCTSSAHAARALAAAVAASSDKPHVFSNVRPTEDAWDILLARAEGLHAHGHGAEACILAVRLAEQMLANPPNLLLELPPAPKRKGKKQNVNPISHQLTVVASATLSKCAFLCTVLSENSEHYHIGFRICLFALEMPRPPASTKPLEVKLANQEADILALLKRLPLGSAELQVIRERAEQLRSGTFKTRGEALLPINLATFIFDALVTLSPLGGSTIVPGVASTSGVSSAAGKSMVNTGTRLLLYKHNSDESLGFDAAVAALGLKANVSEAEHPLLCEGTRRQRGDLALTLLSHYKDEPRKIAKIMEKLLDRDIHTLLNAPLLPAYYSSNPPVRTRSNQPTRREDHDYGGGSGCASSNCNPVANLCELLPADYGSVGGNSRPHSSTSAELELSMCALSMASSGSQSGGVQGMVPTTNAAGTTGTPSSSSTTVSGSQNPNGNPSGSGGGGNGGGGNGGGGGGGGGGGGSTSSRSKESRYKGKRAYPSIPNQPSEASAHFMFELAKNVLTKAGGNSSTSLFTQASTSQNHHGPHRALHMCAFQLGLYALGLHNCVSPNWLSRTYSSHVSWILGQAMEIGAPAISFLIDTWEAHLTPPEAAGMADRASRGWDSNMVYPAAELALSVLPHAAALNPNEIQRAILQCKEQSDLMLERACLTVETAAKGGGVYPEVLFQVARYWYELYMRNTPNNSEFEPHDDTMDHSAVSLSALIESQQQHELQQQQQAVQQQQAVQQQQQVVQQQQQVVQQQQQLGMPNSVVPGGVGPGPGLPVAVQPPVVGSVQNPQAQFQPVGVASLAPLGLAQYPPYSFCQGLYAHHHNMSYPPGQMQMFISAGPPPPPQAYGGYQQPPPQQPPNPQQQQQVVQQQVQQQQVVQQQQQQVQMAGQAPPGHPGQQGHPGQPPSGFQPQPPPGAFQALPPQAYQAMQAGPPGPPMGPPQGYYGPPPPPPPNGPPGVGVGVGVGVGVGVMPMRQHQHQHPVYPFMQQAPPQPPQQQQPPPSQPPVRQRQPHQFTPTQLRYLLAAYNVGMLAMETLARRVHDDRPQAKYARNPPYGEDVKWLLRISKKLGTQYLHQFCICAVNSIVSPFVLHDVAIESAHYLGRNNHQMVMQHLRSALTPLVQKCQQMYIQCIHQKLYHLTQGDYEEFASIVVAARAAFQITPEGNAQFKDWLQSIKRSKSCKKELWTQINAALQSNSK.

The segment at 191–227 (FNVAVTFDRRRISSCNCTCTSSAYWCSHVVAVCLHRI) adopts an SWIM-type zinc-finger fold. 6 disordered regions span residues 684 to 860 (DGNR…GSTA), 1237 to 1262 (SSNP…GGSG), 1310 to 1399 (SSGS…IPNQ), 1735 to 1772 (MQMF…QVVQ), 1786 to 1864 (QQVQ…GVGV), and 1888 to 1916 (PFMQ…RQPH). Residues 724 to 740 (SALTESDSQSSFDAVSH) show a composition bias toward polar residues. Low complexity-rich tracts occupy residues 754–789 (AVGV…STSS) and 835–857 (GRVA…VGSG). Positions 1237-1249 (SSNPPVRTRSNQP) are enriched in polar residues. Positions 1320-1351 (GMVPTTNAAGTTGTPSSSSTTVSGSQNPNGNP) are enriched in low complexity. A compositionally biased stretch (gly residues) spans 1352 to 1377 (SGSGGGGNGGGGNGGGGGGGGGGGGS). Pro residues predominate over residues 1755 to 1764 (QPPPQQPPNP). 2 stretches are compositionally biased toward low complexity: residues 1786 to 1813 (QQVQ…SGFQ) and 1820 to 1835 (AFQA…MQAG). 2 stretches are compositionally biased toward pro residues: residues 1836 to 1859 (PPGP…PNGP) and 1894 to 1908 (PPQP…PSQP).

This sequence belongs to the ZSWIM8 family. As to quaternary structure, component of the SCF-like E3 ubiquitin-protein ligase complex.

It participates in protein modification; protein ubiquitination. Functionally, substrate recognition component of a SCF-like E3 ubiquitin-protein ligase complex that promotes target-directed microRNA degradation (TDMD), a process that mediates degradation of microRNAs (miRNAs). The SCF-like E3 ubiquitin-protein ligase complex acts by catalyzing ubiquitination and subsequent degradation of AGO1, thereby exposing miRNAs for degradation. This is Zinc finger SWIM domain-containing protein 8 homolog from Drosophila melanogaster (Fruit fly).